Here is a 236-residue protein sequence, read N- to C-terminus: Phosphoribosylaminoimidazole-succinocarboxamide synthase (236 aa).

This sequence belongs to the SAICAR synthetase family.

The catalysed reaction is 5-amino-1-(5-phospho-D-ribosyl)imidazole-4-carboxylate + L-aspartate + ATP = (2S)-2-[5-amino-1-(5-phospho-beta-D-ribosyl)imidazole-4-carboxamido]succinate + ADP + phosphate + 2 H(+). It participates in purine metabolism; IMP biosynthesis via de novo pathway; 5-amino-1-(5-phospho-D-ribosyl)imidazole-4-carboxamide from 5-amino-1-(5-phospho-D-ribosyl)imidazole-4-carboxylate: step 1/2. The protein is Phosphoribosylaminoimidazole-succinocarboxamide synthase of Rickettsia typhi (strain ATCC VR-144 / Wilmington).